The chain runs to 236 residues: 2-C-methyl-D-erythritol 4-phosphate cytidylyltransferase (236 aa).

It belongs to the IspD/TarI cytidylyltransferase family. IspD subfamily. In terms of assembly, homodimer.

It carries out the reaction 2-C-methyl-D-erythritol 4-phosphate + CTP + H(+) = 4-CDP-2-C-methyl-D-erythritol + diphosphate. It functions in the pathway isoprenoid biosynthesis; isopentenyl diphosphate biosynthesis via DXP pathway; isopentenyl diphosphate from 1-deoxy-D-xylulose 5-phosphate: step 2/6. In terms of biological role, catalyzes the formation of 4-diphosphocytidyl-2-C-methyl-D-erythritol from CTP and 2-C-methyl-D-erythritol 4-phosphate (MEP). The sequence is that of 2-C-methyl-D-erythritol 4-phosphate cytidylyltransferase from Escherichia fergusonii (strain ATCC 35469 / DSM 13698 / CCUG 18766 / IAM 14443 / JCM 21226 / LMG 7866 / NBRC 102419 / NCTC 12128 / CDC 0568-73).